The following is a 145-amino-acid chain: D-aminoacyl-tRNA deacylase (145 aa).

The short motif at 137–138 is the Gly-cisPro motif, important for rejection of L-amino acids element; the sequence is GP.

This sequence belongs to the DTD family. In terms of assembly, homodimer.

Its subcellular location is the cytoplasm. It catalyses the reaction glycyl-tRNA(Ala) + H2O = tRNA(Ala) + glycine + H(+). It carries out the reaction a D-aminoacyl-tRNA + H2O = a tRNA + a D-alpha-amino acid + H(+). In terms of biological role, an aminoacyl-tRNA editing enzyme that deacylates mischarged D-aminoacyl-tRNAs. Also deacylates mischarged glycyl-tRNA(Ala), protecting cells against glycine mischarging by AlaRS. Acts via tRNA-based rather than protein-based catalysis; rejects L-amino acids rather than detecting D-amino acids in the active site. By recycling D-aminoacyl-tRNA to D-amino acids and free tRNA molecules, this enzyme counteracts the toxicity associated with the formation of D-aminoacyl-tRNA entities in vivo and helps enforce protein L-homochirality. This is D-aminoacyl-tRNA deacylase from Methylacidiphilum infernorum (isolate V4) (Methylokorus infernorum (strain V4)).